Here is an 81-residue protein sequence, read N- to C-terminus: Trefoil factor 1 (81 aa).

The N-terminal stretch at 1-23 is a signal peptide; the sequence is MEHRVIYVLVLVCALTLSSLAQG. Residues 26-69 form the P-type domain; sequence ETCTVAPHHRDNCGSPGITPSQCKDKGCCFDNTVRGVPWCYYPV. 3 disulfides stabilise this stretch: cysteine 28–cysteine 54, cysteine 38–cysteine 53, and cysteine 48–cysteine 65.

It localises to the secreted. In terms of biological role, stabilizer of the mucous gel overlying the gastrointestinal mucosa that provides a physical barrier against various noxious agents. This is Trefoil factor 1 (TFF1) from Canis lupus familiaris (Dog).